The following is a 424-amino-acid chain: Gamma-glutamyl phosphate reductase (424 aa).

This sequence belongs to the gamma-glutamyl phosphate reductase family.

The protein resides in the cytoplasm. The catalysed reaction is L-glutamate 5-semialdehyde + phosphate + NADP(+) = L-glutamyl 5-phosphate + NADPH + H(+). It participates in amino-acid biosynthesis; L-proline biosynthesis; L-glutamate 5-semialdehyde from L-glutamate: step 2/2. Catalyzes the NADPH-dependent reduction of L-glutamate 5-phosphate into L-glutamate 5-semialdehyde and phosphate. The product spontaneously undergoes cyclization to form 1-pyrroline-5-carboxylate. In Dehalococcoides mccartyi (strain CBDB1), this protein is Gamma-glutamyl phosphate reductase.